The following is a 622-amino-acid chain: MSTDNKQSLPAITLAAIGVVYGDIGTSPLYTLRECLSGQFGFGVERDAVFGFLSLIFWLLIFVVSIKYLTFVMRADNAGEGGILTLMSLAGRNTSARTTSMLVIMGLIGGSFFYGEVVITPAISVMSAIEGLEIVAPQLDTWIVPLSIIVLTLLFMIQKHGTGMVGKLFAPIMLTWFLILAVLGLRSIIANPEVLHALNPVWAVRFFLEYKTVSFIALGAVVLSITGVEALYADMGHFGKFPIRLAWFTVVLPSLVLNYFGQGALLLKHPEAIKNPFFLLAPDWALIPLLILAALATVIASQAVISGVFSLTRQAVRLGYLSPMRIIHTSEMESGQIYIPFVNWLLYFAVVVVIVSFEHSSNLAAAYGIAVTGTMVLTSILSTTVARKNWHWNKYFVALILIAFLCVDIPLFSANLDKLLSGGWLPLSLGLIMFTIMTTWKSERFRLLRRMHEHGNSLEAMIASLEKSPPVRVPGTAVYMSRALSVIPFALLHNLKHNKVLHERVILLTLRTEDAPYVHNVRRVQIEQLSPTFWRVVASYGWRETPNVEEVFHRCGLEGLSCRMMETSFFMSHESLIVGKRPWYLRLRGKLYLLLQRNALRAPDQFEIPPNRVIELGTQVEI.

Helical transmembrane passes span 9 to 29 (LPAI…TSPL), 49 to 69 (VFGF…IKYL), 103 to 123 (VIMG…TPAI), 137 to 157 (PQLD…LFMI), 165 to 185 (VGKL…VLGL), 213 to 233 (VSFI…ALYA), 247 to 267 (WFTV…ALLL), 276 to 296 (PFFL…AALA), 337 to 357 (IYIP…IVSF), 363 to 383 (LAAA…ILST), 396 to 416 (FVAL…SANL), and 419 to 439 (LLSG…IMTT).

This sequence belongs to the HAK/KUP transporter (TC 2.A.72) family.

The protein localises to the cell inner membrane. The catalysed reaction is K(+)(in) + H(+)(in) = K(+)(out) + H(+)(out). Its function is as follows. Responsible for the low-affinity transport of potassium into the cell. Likely operates as a K(+):H(+) symporter. The polypeptide is Low affinity potassium transport system protein Kup (Salmonella paratyphi B (strain ATCC BAA-1250 / SPB7)).